The sequence spans 232 residues: MVQTKRQKAIDIAVVPGKAYGIDEAIKILKTATKAKFIESVDVAIRLGVDVKKSDQQVRGSTLLPAGTGRDVRVAVFVPSGAKAEDALAAGADAVGMDDLAEKMQAGDLNYDVVIATPDAMRVVGKLGTLLGPRGLMPNPKVGTVSQNPGEAVKNAKSGQVRYRADKAGIIHCVIGKVNFDDEALKLNLQALLVDLIKIKPTASKGTYLQKVSLSSTMGPGVMIDQSTLSLK.

Belongs to the universal ribosomal protein uL1 family. Part of the 50S ribosomal subunit.

Binds directly to 23S rRNA. The L1 stalk is quite mobile in the ribosome, and is involved in E site tRNA release. In terms of biological role, protein L1 is also a translational repressor protein, it controls the translation of the L11 operon by binding to its mRNA. The polypeptide is Large ribosomal subunit protein uL1 (Xylella fastidiosa (strain M23)).